The sequence spans 430 residues: Histidine--tRNA ligase (430 aa).

Belongs to the class-II aminoacyl-tRNA synthetase family. In terms of assembly, homodimer.

It localises to the cytoplasm. It carries out the reaction tRNA(His) + L-histidine + ATP = L-histidyl-tRNA(His) + AMP + diphosphate + H(+). The protein is Histidine--tRNA ligase of Acinetobacter baumannii (strain AB307-0294).